Consider the following 429-residue polypeptide: Nocturnin (429 aa).

Residues methionine 1–tyrosine 73 constitute a mitochondrion transit peptide. The disordered stretch occupies residues arginine 21 to glycine 68. Position 193 (glutamate 193) interacts with Mg(2+). Substrate contacts are provided by residues glutamate 193, lysine 217–tryptophan 219, asparagine 261, histidine 284–alanine 287, and aspartate 322–asparagine 324. The segment at asparagine 341–proline 351 is interaction with PPARG. A substrate-binding site is contributed by histidine 412.

This sequence belongs to the CCR4/nocturin family. As to quaternary structure, interacts with PPARG. Mg(2+) is required as a cofactor. In terms of tissue distribution, highly expressed in the differentiated adipocyte (at protein level). Ubiquitous.

It localises to the cytoplasm. The protein resides in the nucleus. It is found in the perinuclear region. The protein localises to the mitochondrion. It carries out the reaction NADP(+) + H2O = phosphate + NAD(+). The catalysed reaction is NADPH + H2O = phosphate + NADH. Phosphatase which catalyzes the conversion of NADP(+) to NAD(+) and of NADPH to NADH. Shows a small preference for NADPH over NADP(+). Represses translation and promotes degradation of target mRNA molecules. Plays an important role in post-transcriptional regulation of metabolic genes under circadian control. Exerts a rhythmic post-transcriptional control of genes necessary for metabolic functions including nutrient absorption, glucose/insulin sensitivity, lipid metabolism, adipogenesis, inflammation and osteogenesis. Plays an important role in favoring adipogenesis over osteoblastogenesis and acts as a key regulator of the adipogenesis/osteogenesis balance. Promotes adipogenesis by facilitating PPARG nuclear translocation which activates its transcriptional activity. Regulates circadian expression of NOS2 in the liver and negatively regulates the circadian expression of IGF1 in the bone. Critical for proper development of early embryos. The chain is Nocturnin from Mus musculus (Mouse).